The chain runs to 400 residues: Acetate kinase (400 aa).

N10 is a Mg(2+) binding site. K17 contributes to the ATP binding site. R91 provides a ligand contact to substrate. The active-site Proton donor/acceptor is D150. ATP is bound by residues 210–214, 285–287, and 333–337; these read HLGNG, DCR, and GIGEN. E387 serves as a coordination point for Mg(2+).

Belongs to the acetokinase family. As to quaternary structure, homodimer. The cofactor is Mg(2+). It depends on Mn(2+) as a cofactor.

It is found in the cytoplasm. The enzyme catalyses acetate + ATP = acetyl phosphate + ADP. The protein operates within metabolic intermediate biosynthesis; acetyl-CoA biosynthesis; acetyl-CoA from acetate: step 1/2. Its function is as follows. Catalyzes the formation of acetyl phosphate from acetate and ATP. Can also catalyze the reverse reaction. This Escherichia coli O157:H7 protein is Acetate kinase.